The chain runs to 300 residues: Acetyl-coenzyme A carboxylase carboxyl transferase subunit beta 1 (300 aa).

The CoA carboxyltransferase N-terminal domain occupies 26 to 294 (MWVKCPSCGD…HTSAAQHVPA (269 aa)). 4 residues coordinate Zn(2+): C30, C33, C49, and C51. The C4-type zinc-finger motif lies at 30 to 51 (CPSCGDLIYTRQFSDNLKVCKC).

It belongs to the AccD/PCCB family. As to quaternary structure, acetyl-CoA carboxylase is a heterohexamer composed of biotin carboxyl carrier protein (AccB), biotin carboxylase (AccC) and two subunits each of ACCase subunit alpha (AccA) and ACCase subunit beta (AccD). It depends on Zn(2+) as a cofactor.

It is found in the cytoplasm. It carries out the reaction N(6)-carboxybiotinyl-L-lysyl-[protein] + acetyl-CoA = N(6)-biotinyl-L-lysyl-[protein] + malonyl-CoA. It participates in lipid metabolism; malonyl-CoA biosynthesis; malonyl-CoA from acetyl-CoA: step 1/1. Functionally, component of the acetyl coenzyme A carboxylase (ACC) complex. Biotin carboxylase (BC) catalyzes the carboxylation of biotin on its carrier protein (BCCP) and then the CO(2) group is transferred by the transcarboxylase to acetyl-CoA to form malonyl-CoA. The polypeptide is Acetyl-coenzyme A carboxylase carboxyl transferase subunit beta 1 (Roseiflexus sp. (strain RS-1)).